The chain runs to 248 residues: Homeobox protein Hox-A4 (248 aa).

Positions 23–107 (YQQSGYIPNP…PDGGAGANAS (85 aa)) are disordered. The segment covering 35 to 51 (YYERPKDTGFPHHDEPS) has biased composition (basic and acidic residues). Residues 128-133 (VYPWMK) carry the Antp-type hexapeptide motif. The segment at residues 149–208 (PKRSRTAYTRQQALELEKEFHFNRYLTRRRRVEIAHTMCLSERQVKIWFQNRRMKWKKEH) is a DNA-binding region (homeobox). Residues 207-248 (EHKLPNTKIRSSSSASSSASGAQQQQIKTGQQLVPTPCTAGL) form a disordered region. Residues 217 to 238 (SSSSASSSASGAQQQQIKTGQQ) show a composition bias toward low complexity.

The protein belongs to the Antp homeobox family. Deformed subfamily.

The protein resides in the nucleus. Its function is as follows. Sequence-specific transcription factor which is part of a developmental regulatory system that provides cells with specific positional identities on the anterior-posterior axis. The protein is Homeobox protein Hox-A4 (hoxa4) of Morone saxatilis (Striped bass).